The following is a 318-amino-acid chain: Probable ABC transporter permease protein MG189 (318 aa).

6 helical membrane-spanning segments follow: residues 42 to 62 (VLGFFGLIVIFPFYLMVVVSF), 98 to 118 (AIVVNTLVTVLSVLLTLFFTI), 134 to 154 (LVWFFFLSVLILPESALLIGQ), 169 to 189 (PLIVLGLIMPFVSSVFSGFMY), 230 to 250 (VGILTAFSAWNSYLWPLLLLG), and 282 to 302 (LKMSAAILAILPMFIIYFLFH). One can recognise an ABC transmembrane type-1 domain in the interval 99–301 (IVVNTLVTVL…LPMFIIYFLF (203 aa)).

It belongs to the binding-protein-dependent transport system permease family. MalFG subfamily.

The protein localises to the cell membrane. Functionally, probably part of a binding-protein-dependent transport system. Probably responsible for the translocation of the substrate across the membrane. The polypeptide is Probable ABC transporter permease protein MG189 (Mycoplasma genitalium (strain ATCC 33530 / DSM 19775 / NCTC 10195 / G37) (Mycoplasmoides genitalium)).